The sequence spans 25 residues: Kunitz-type serine protease inhibitor 2 (25 aa).

One can recognise a BPTI/Kunitz inhibitor domain in the interval 6–25 (VCELPKEVGGPCRGHIIPRY).

It is found in the secreted. Its function is as follows. Inhibits bovine trypsin, human plasma kallikrein and human neutrophil elastase. The protein is Kunitz-type serine protease inhibitor 2 of Rhipicephalus microplus (Cattle tick).